A 185-amino-acid polypeptide reads, in one-letter code: Large ribosomal subunit protein bL25 (185 aa).

Belongs to the bacterial ribosomal protein bL25 family. CTC subfamily. As to quaternary structure, part of the 50S ribosomal subunit; part of the 5S rRNA/L5/L18/L25 subcomplex. Contacts the 5S rRNA. Binds to the 5S rRNA independently of L5 and L18.

This is one of the proteins that binds to the 5S RNA in the ribosome where it forms part of the central protuberance. The chain is Large ribosomal subunit protein bL25 from Microcystis aeruginosa (strain NIES-843 / IAM M-2473).